The chain runs to 128 residues: Z-ring associated protein G (128 aa).

A helical transmembrane segment spans residues glutamate 7–methionine 27. Residues glutamine 37–aspartate 75 are a coiled coil. The tract at residues asparagine 105 to serine 128 is disordered. Positions alanine 107 to serine 119 are enriched in basic and acidic residues.

The protein belongs to the ZapG family. In terms of assembly, homotetramer. In solution, is primarily monomeric but forms small amounts of stable tetramer and hexadecamer. The crystal structure of the cytosolic region shows a coiled-coil tetramer in the asymmetric unit that is very likely to be a physiologically relevant assembly of the protein.

It is found in the cell inner membrane. Its function is as follows. Involved in cell division, cell envelope biogenesis and cell shape maintenance. The protein is Z-ring associated protein G of Haemophilus ducreyi (strain 35000HP / ATCC 700724).